We begin with the raw amino-acid sequence, 687 residues long: Methionine--tRNA ligase (687 aa).

The short motif at 14–24 (PYANGYIHLGH) is the 'HIGH' region element. Zn(2+) is bound by residues C145, C148, C158, and C161. The 'KMSKS' region motif lies at 329-333 (KMSKS). K332 contributes to the ATP binding site. The tRNA-binding domain occupies 585 to 687 (DFDKVDLRIG…DGAQVGQRVK (103 aa)).

The protein belongs to the class-I aminoacyl-tRNA synthetase family. MetG type 1 subfamily. Homodimer. Zn(2+) is required as a cofactor.

Its subcellular location is the cytoplasm. It carries out the reaction tRNA(Met) + L-methionine + ATP = L-methionyl-tRNA(Met) + AMP + diphosphate. Its function is as follows. Is required not only for elongation of protein synthesis but also for the initiation of all mRNA translation through initiator tRNA(fMet) aminoacylation. This Bdellovibrio bacteriovorus (strain ATCC 15356 / DSM 50701 / NCIMB 9529 / HD100) protein is Methionine--tRNA ligase.